The following is a 39-amino-acid chain: Photosystem II reaction center protein L (39 aa).

A helical membrane pass occupies residues 18–38 (SLYLGLLLVFVMGILFSSYFF).

The protein belongs to the PsbL family. As to quaternary structure, PSII is composed of 1 copy each of membrane proteins PsbA, PsbB, PsbC, PsbD, PsbE, PsbF, PsbH, PsbI, PsbJ, PsbK, PsbL, PsbM, PsbT, PsbX, PsbY, Psb30/Ycf12, peripheral proteins PsbO, CyanoQ (PsbQ), PsbU, PsbV and a large number of cofactors. It forms dimeric complexes.

It localises to the cellular thylakoid membrane. Functionally, one of the components of the core complex of photosystem II (PSII). PSII is a light-driven water:plastoquinone oxidoreductase that uses light energy to abstract electrons from H(2)O, generating O(2) and a proton gradient subsequently used for ATP formation. It consists of a core antenna complex that captures photons, and an electron transfer chain that converts photonic excitation into a charge separation. This subunit is found at the monomer-monomer interface and is required for correct PSII assembly and/or dimerization. This is Photosystem II reaction center protein L from Prochlorococcus marinus (strain NATL2A).